The primary structure comprises 105 residues: Iron-sulfur cluster assembly protein CyaY (105 aa).

Belongs to the frataxin family.

Its function is as follows. Involved in iron-sulfur (Fe-S) cluster assembly. May act as a regulator of Fe-S biogenesis. This chain is Iron-sulfur cluster assembly protein CyaY, found in Dechloromonas aromatica (strain RCB).